The primary structure comprises 416 residues: S-layer protein B (416 aa).

The signal sequence occupies residues 1–20 (MKYNLLPLILLSLLVAPLLA). Residues 310–330 (IASLNSTIQSLESQISSLSST) are a coiled coil. The helical transmembrane segment at 392–412 (IALAVSIIAIIISIVVLILVF) threads the bilayer.

It belongs to the Sulfolobales SlaB family. As to quaternary structure, the mushroom-shaped unit cells of the Sulfolobales' S-layers may consist of three SlaB subunits and six SlaA subunits.

It localises to the secreted. The protein localises to the cell wall. It is found in the S-layer. Its subcellular location is the cell membrane. S-layer small protein. May anchor the complex to the cell membrane. In Metallosphaera sedula (strain ATCC 51363 / DSM 5348 / JCM 9185 / NBRC 15509 / TH2), this protein is S-layer protein B.